We begin with the raw amino-acid sequence, 591 residues long: MSANGWFQILLFLGLILAVTKPLGVFMARVFNRERTFLDPVLRPIERLIYRCTAVDESQEMKWTEYAIAMLLFSAVSMLMLYIMQRVQLHLPFNPQKFGAVDPAHLAFNTAASFTTNTNWQAYSGEAVMSYFTQMAGLAYHNFMSAAVGIAIAIAFIRGIARRQSETIGNFWVDMTRAVLWVLLPFCIMGALALVSQGVVQNLKPYDTVKLVEPQQVTTTGADGKSSTQTITTQTIAQGPVASQEIIKEWGTNGGGFFNANSSHPYENPTPLSNLIEMFSIFAISAGLTYTLGRMTGSQRHGWAVWGAMAALFLVGVSVVYWAEASGNPLLAGVDQHTSAMQAGGNMEGKEVRFGIANTALFATITTDASCGAINGWHDSFTPLGGMVPLVNIMLSEVIFGGVGAGMYGMLIYIVLAVFIAGLMVGRTPEYLGKKIEAYDVKMAMLVALIFPLIILVFSAISSVKTFGTGSILNPGPHGLSEILYAFVSGTGNNGSAFGGLTVNTPWYDVAIGIAMLGGRFLMIIPMLAIAGNLAKKKYVPASAGTFPVTTPLFSVLLIGTIIIIGALTFFPALSLGPILEHLQMHAGKAF.

10 helical membrane passes run 6 to 26, 63 to 83, 137 to 157, 179 to 199, 272 to 292, 303 to 323, 405 to 425, 444 to 464, 510 to 530, and 553 to 573; these read WFQILLFLGLILAVTKPLGVF, WTEYAIAMLLFSAVSMLMLYI, GLAYHNFMSAAVGIAIAIAFI, VLWVLLPFCIMGALALVSQGV, LSNLIEMFSIFAISAGLTYTL, WAVWGAMAALFLVGVSVVYWA, AGMYGMLIYIVLAVFIAGLMV, AMLVALIFPLIILVFSAISSV, VAIGIAMLGGRFLMIIPMLAI, and LFSVLLIGTIIIIGALTFFPA.

This sequence belongs to the KdpA family. The system is composed of three essential subunits: KdpA, KdpB and KdpC.

It localises to the cell inner membrane. Functionally, part of the high-affinity ATP-driven potassium transport (or Kdp) system, which catalyzes the hydrolysis of ATP coupled with the electrogenic transport of potassium into the cytoplasm. This subunit binds the periplasmic potassium ions and delivers the ions to the membrane domain of KdpB through an intramembrane tunnel. This is Potassium-transporting ATPase potassium-binding subunit from Koribacter versatilis (strain Ellin345).